Consider the following 96-residue polypeptide: Protein RnfH (96 aa).

It belongs to the UPF0125 (RnfH) family.

This Klebsiella pneumoniae (strain 342) protein is Protein RnfH.